The primary structure comprises 252 residues: 3-dehydroquinate dehydratase (252 aa).

Residues glutamate 46–arginine 48 and arginine 82 contribute to the 3-dehydroquinate site. Histidine 143 (proton donor/acceptor) is an active-site residue. Catalysis depends on lysine 170, which acts as the Schiff-base intermediate with substrate. 3 residues coordinate 3-dehydroquinate: arginine 212, serine 231, and glutamine 235.

Belongs to the type-I 3-dehydroquinase family. Homodimer.

It catalyses the reaction 3-dehydroquinate = 3-dehydroshikimate + H2O. It participates in metabolic intermediate biosynthesis; chorismate biosynthesis; chorismate from D-erythrose 4-phosphate and phosphoenolpyruvate: step 3/7. Involved in the third step of the chorismate pathway, which leads to the biosynthesis of aromatic amino acids. Catalyzes the cis-dehydration of 3-dehydroquinate (DHQ) and introduces the first double bond of the aromatic ring to yield 3-dehydroshikimate. This chain is 3-dehydroquinate dehydratase, found in Listeria welshimeri serovar 6b (strain ATCC 35897 / DSM 20650 / CCUG 15529 / CIP 8149 / NCTC 11857 / SLCC 5334 / V8).